Here is a 2109-residue protein sequence, read N- to C-terminus: General transcription factor 3C polypeptide 1 (2109 aa).

The interval 467 to 521 (LPEGEDTFLSESDSEEERSSSKRRGRGSQKDTRASANLRPKTQPHHSTPTKGGWK) is disordered. A compositionally biased stretch (acidic residues) spans 469–482 (EGEDTFLSESDSEE). A Glycyl lysine isopeptide (Lys-Gly) (interchain with G-Cter in SUMO2) cross-link involves residue Lys-529. Residues 586–609 (MENPKESSSSLKTGRHSSGQDKPH) are disordered. Ser-667 carries the post-translational modification Phosphoserine. A compositionally biased stretch (polar residues) spans 718–727 (STANRVKTSQ). The disordered stretch occupies residues 718 to 775 (STANRVKTSQPPVPQGEAEEDSQGKEGPSGSGDSQLSASSRSESGRMKKSDNKMGITP). Ser-739 is subject to Phosphoserine. Positions 748-759 (SGDSQLSASSRS) are enriched in low complexity. Residues 760–769 (ESGRMKKSDN) are compositionally biased toward basic and acidic residues. Glycyl lysine isopeptide (Lys-Gly) (interchain with G-Cter in SUMO2) cross-links involve residues Lys-770 and Lys-833. Disordered stretches follow at residues 836 to 857 (SGRA…SEAP) and 1059 to 1082 (RKNS…ESAM). Ser-1062 and Ser-1068 each carry phosphoserine. Positions 1073-1082 (SLQKEQESAM) are enriched in basic and acidic residues. Lys-1142 is covalently cross-linked (Glycyl lysine isopeptide (Lys-Gly) (interchain with G-Cter in SUMO2)). The interval 1202–1241 (SLDRNRRVRGGKSQKRKRLKKDPGKKIKRKKKGEFPGEKS) is disordered. Residues 1207 to 1221 (RRVRGGKSQKRKRLK) show a composition bias toward basic residues. A phosphoserine mark is found at Ser-1253 and Ser-1611. Positions 1608–1631 (KDGSLEDDEDEEDDLDEGVGGKRR) are disordered. Acidic residues predominate over residues 1612–1624 (LEDDEDEEDDLDE). A phosphoserine mark is found at Ser-1632 and Ser-1653. The span at 1823 to 1833 (EDADIQREDPQ) shows a compositional bias: basic and acidic residues. The disordered stretch occupies residues 1823-1961 (EDADIQREDP…GSEDPRGFTE (139 aa)). Residues 1838–1848 (EGSSSEDSPPE) show a composition bias toward low complexity. Phosphoserine is present on residues Ser-1856, Ser-1865, Ser-1868, Ser-1896, and Ser-1911. Over residues 1916–1926 (LEDTAAAGAAQ) the composition is skewed to low complexity. The segment covering 1937–1947 (SPGQEQLSGQA) has biased composition (polar residues). A Phosphoserine modification is found at Ser-1969.

Belongs to the TFIIIC subunit 1 family. As to quaternary structure, part of the TFIIIC subcomplex TFIIIC2, consisting of six subunits, GTF3C1, GTF3C2, GTF3C3, GTF3C4, GTF3C5 and GTF3C6. Interacts with IGHMBP2. Interacts with MAF1.

It is found in the nucleus. Required for RNA polymerase III-mediated transcription. Component of TFIIIC that initiates transcription complex assembly on tRNA and is required for transcription of 5S rRNA and other stable nuclear and cytoplasmic RNAs. Binds to the box B promoter element. In Homo sapiens (Human), this protein is General transcription factor 3C polypeptide 1 (GTF3C1).